The sequence spans 609 residues: Threonine--tRNA ligase (609 aa).

Residues methionine 1 to valine 145 are editing domain. Residues isoleucine 194–proline 485 are catalytic. Zn(2+) is bound by residues cysteine 286, histidine 338, and histidine 458.

Belongs to the class-II aminoacyl-tRNA synthetase family. In terms of assembly, homodimer. Requires Zn(2+) as cofactor.

Its subcellular location is the cytoplasm. It carries out the reaction tRNA(Thr) + L-threonine + ATP = L-threonyl-tRNA(Thr) + AMP + diphosphate + H(+). In terms of biological role, catalyzes the attachment of threonine to tRNA(Thr) in a two-step reaction: L-threonine is first activated by ATP to form Thr-AMP and then transferred to the acceptor end of tRNA(Thr). Also edits incorrectly charged L-seryl-tRNA(Thr). This is Threonine--tRNA ligase from Methanosphaerula palustris (strain ATCC BAA-1556 / DSM 19958 / E1-9c).